The following is a 446-amino-acid chain: Butyryl-CoA:acetate CoA-transferase (446 aa).

220-224 contributes to the CoA binding site; sequence GIGGM. Residue Glu245 is the 5-glutamyl coenzyme A thioester intermediate of the active site. Positions 320, 343, and 370 each coordinate CoA.

The protein belongs to the acetyl-CoA hydrolase/transferase family. Butyryl-CoA CoA-transferase subfamily.

It carries out the reaction butanoate + acetyl-CoA = butanoyl-CoA + acetate. The enzyme catalyses propanoate + acetyl-CoA = propanoyl-CoA + acetate. It functions in the pathway lipid metabolism; butanoate metabolism. Coenzyme A-transferase that converts butyryl-CoA to butyrate. Can also use proprionyl-CoA as substrate in vitro. This chain is Butyryl-CoA:acetate CoA-transferase, found in Anaerostipes caccae (strain DSM 14662 / CCUG 47493 / JCM 13470 / NCIMB 13811 / L1-92).